We begin with the raw amino-acid sequence, 382 residues long: Pyrimidine monooxygenase RutA (382 aa).

Residues 68 to 69, N134, E143, 159 to 160, and S209 contribute to the FMN site; these read IK and RY.

Belongs to the NtaA/SnaA/DszA monooxygenase family. RutA subfamily.

It catalyses the reaction uracil + FMNH2 + NADH + O2 = (Z)-3-ureidoacrylate + FMN + NAD(+) + H2O + H(+). The enzyme catalyses thymine + FMNH2 + NADH + O2 = (Z)-2-methylureidoacrylate + FMN + NAD(+) + H2O + H(+). Functionally, catalyzes the pyrimidine ring opening between N-3 and C-4 by an unusual flavin hydroperoxide-catalyzed mechanism, adding oxygen atoms in the process to yield ureidoacrylate peracid, that immediately reacts with FMN forming ureidoacrylate and FMN-N(5)-oxide. The FMN-N(5)-oxide reacts spontaneously with NADH to produce FMN. Requires the flavin reductase RutF to regenerate FMN in vivo. This chain is Pyrimidine monooxygenase RutA, found in Escherichia coli O8 (strain IAI1).